The chain runs to 366 residues: Homer protein homolog 1 (366 aa).

Residues 1–110 (MGEQPIFSTR…EKFQEFKEAA (110 aa)) enclose the WH1 domain. N-acetylglycine is present on Gly2. The disordered stretch occupies residues 114 to 189 (KEKSQEKMEL…RTQGLSHASS (76 aa)). A compositionally biased stretch (polar residues) spans 138 to 147 (SPLTPESING). Residues 193–364 (KHWEAELATL…LRDNLAKLLE (172 aa)) adopt a coiled-coil conformation. Positions 302–366 (KLQEVEIRNK…DNLAKLLECS (65 aa)) are required for tetramerization. Ser318 carries the phosphoserine modification.

The protein belongs to the Homer family. In terms of assembly, tetramer; this tetrameric structure is critical for forming the high-order complex with SHANK1, which in turn is necessary for the structural and functional integrity of dendritic spines. Interacts with GRM1, GRM5, ITPR1, DYN3, RYR1, RYR2 and SHANK3. Interacts with IFT57 and OPHN1. Isoform 1 and isoform 2 encode coiled-coil structures that mediate homo- and heteromultimerization. Interacts with SHANK1; forms high-order polymerized complex with a mesh-like network structure, at least composed of SHANK1, HOMER1 and DLGAP1; the complex formation is SHANK1 multimerization dependent. Interacts with NFATC4. Interacts with DAGLA (via PPXXF motif); this interaction is required for the cell membrane localization of DAGLA. Interacts with SRGAP2. In terms of tissue distribution, highly expressed in cortex, Purkinje cells of the cerebellum, hippocampus, striatum and olfactory bulb. Isoform 1 and isoform 3 are expressed in skeletal and cardiac muscle.

It is found in the cytoplasm. It localises to the postsynaptic density. The protein resides in the synapse. The protein localises to the cell projection. Its subcellular location is the dendritic spine. Functionally, postsynaptic density scaffolding protein. Binds and cross-links cytoplasmic regions of GRM1, GRM5, ITPR1, DNM3, RYR1, RYR2, SHANK1 and SHANK3. By physically linking GRM1 and GRM5 with ER-associated ITPR1 receptors, it aids the coupling of surface receptors to intracellular calcium release. May also couple GRM1 to PI3 kinase through its interaction with AGAP2. Differentially regulates the functions of the calcium activated channel ryanodine receptors RYR1 and RYR2. Isoform 1 decreases the activity of RYR2, and increases the activity of RYR1, whereas isoform 3 counteracts the effects by competing for binding sites. Isoform 1 regulates the trafficking and surface expression of GRM5. Isoform 3 acts as a natural dominant negative, in dynamic competition with constitutively expressed isoform 1, and isoform 2 to regulate synaptic metabotropic glutamate function. Isoform 3, may be involved in the structural changes that occur at synapses during long-lasting neuronal plasticity and development. Forms a high-order complex with SHANK1, which in turn is necessary for the structural and functional integrity of dendritic spines. Negatively regulates T cell activation by inhibiting the calcineurin-NFAT pathway. Acts by competing with calcineurin/PPP3CA for NFAT protein binding, hence preventing NFAT activation by PPP3CA. This is Homer protein homolog 1 from Rattus norvegicus (Rat).